Reading from the N-terminus, the 271-residue chain is Phosphatidylinositol transfer protein alpha isoform (271 aa).

The a 1,2-diacyl-sn-glycero-3-phospho-(1D-myo-inositol) site is built by T59, K61, E86, N90, T97, and K195. K216 carries the post-translational modification N6-acetyllysine. The segment covering T251–V264 has biased composition (basic and acidic residues). The segment at T251–D271 is disordered.

It belongs to the PtdIns transfer protein family. PI transfer class I subfamily. Phosphorylated by PKC in a calcium and phosphatidylserine-dependent manner. As to expression, expressed in a wide range of tissues.

Its subcellular location is the cytoplasm. The protein resides in the nucleus. The catalysed reaction is a 1,2-diacyl-sn-glycero-3-phosphocholine(in) = a 1,2-diacyl-sn-glycero-3-phosphocholine(out). The enzyme catalyses a 1,2-diacyl-sn-glycero-3-phospho-(1D-myo-inositol)(in) = a 1,2-diacyl-sn-glycero-3-phospho-(1D-myo-inositol)(out). With respect to regulation, phosphatidylinositol transfer activity is inhibited by N-ethylmaleimide. In terms of biological role, catalyzes the transfer of phosphatidylinositol (PI) and phosphatidylcholine (PC) between membranes. Shows a preference for PI and PC containing shorter saturated or monosaturated acyl chains at the sn-1 and sn-2 positions. Preference order for PC is C16:1 &gt; C16:0 &gt; C18:1 &gt; C18:0 &gt; C20:4 and for PI is C16:1 &gt; C16:0 &gt; C18:1 &gt; C18:0 &gt; C20:4 &gt; C20:3. The sequence is that of Phosphatidylinositol transfer protein alpha isoform (Pitpna) from Rattus norvegicus (Rat).